Reading from the N-terminus, the 88-residue chain is Small ribosomal subunit protein uS19 (88 aa).

The protein belongs to the universal ribosomal protein uS19 family.

Functionally, protein S19 forms a complex with S13 that binds strongly to the 16S ribosomal RNA. The sequence is that of Small ribosomal subunit protein uS19 (rpsS) from Mycoplasma capricolum subsp. capricolum (strain California kid / ATCC 27343 / NCTC 10154).